We begin with the raw amino-acid sequence, 505 residues long: Annexin A11 (505 aa).

Pro residues-rich tracts occupy residues 1 to 17 (MSYP…PPAA) and 99 to 160 (PVPP…PVPL). Disordered stretches follow at residues 1–38 (MSYP…PPIG) and 84–199 (PVPP…DAPG). Low complexity predominate over residues 161–177 (PGQQQPVPSYPGYPGSG). Annexin repeat units lie at residues 200–271 (FDPL…ALMK), 272–343 (TPVL…SLSQ), 355–427 (SLAQ…AVVK), and 431–502 (NTPA…KICG). N6-acetyllysine occurs at positions 248 and 255. N6-acetyllysine is present on Lys-479.

Belongs to the annexin family. As to quaternary structure, interacts with S100A6. Interacts with PDCD6 in a calcium-dependent manner. Interacts with KIF23 during cytokinesis.

Its subcellular location is the cytoplasm. It localises to the melanosome. The protein resides in the nucleus envelope. It is found in the nucleus. The protein localises to the nucleoplasm. Its subcellular location is the cytoskeleton. It localises to the spindle. Functionally, binds specifically to calcyclin in a calcium-dependent manner. Required for midbody formation and completion of the terminal phase of cytokinesis. The protein is Annexin A11 (ANXA11) of Homo sapiens (Human).